The chain runs to 155 residues: Cytochrome c-type biogenesis protein CcmE (155 aa).

Topologically, residues 1 to 8 (MHPKRKQR) are cytoplasmic. A helical; Signal-anchor for type II membrane protein transmembrane segment spans residues 9–29 (LILVLFVVLVSSVGVSLTLYA). Topologically, residues 30–155 (LNENINLFYP…KTCKGISYDS (126 aa)) are periplasmic. Heme contacts are provided by His124 and Tyr128.

Belongs to the CcmE/CycJ family.

The protein resides in the cell inner membrane. Its function is as follows. Heme chaperone required for the biogenesis of c-type cytochromes. Transiently binds heme delivered by CcmC and transfers the heme to apo-cytochromes in a process facilitated by CcmF and CcmH. This chain is Cytochrome c-type biogenesis protein CcmE, found in Teredinibacter turnerae (strain ATCC 39867 / T7901).